Consider the following 541-residue polypeptide: Probable inorganic phosphate transporter 1-12 (541 aa).

Over 1–26 (MGRQDQQLQVLNALDAAKTQWYHFTA) the chain is Cytoplasmic. The helical transmembrane segment at 27–47 (IIVAGMGFFTDAYDLFCISLV) threads the bilayer. Residues 48–70 (TKLLGRIYYTDPASPTPGSLPPN) lie on the Extracellular side of the membrane. A helical membrane pass occupies residues 71 to 91 (IAAAVNGVALCGTLSGQLFFG). The Cytoplasmic segment spans residues 92 to 100 (WLGDKLGRK). A helical membrane pass occupies residues 101-121 (SVYGMTLLLMVICSIASGLSF). Over 122–124 (SHT) the chain is Extracellular. The helical transmembrane segment at 125–145 (PTSVMATLCFFRFWLGFGIGG) threads the bilayer. Residues 146 to 163 (DYPLSATIMSEYANKKTR) are Cytoplasmic-facing. Residues 164 to 184 (GAFIAAVFAMQGFGILAGGVV) traverse the membrane as a helical segment. Residues 185 to 213 (TLAMSAGFQAAFPAPAYEVNAAASTVPQA) lie on the Extracellular side of the membrane. A helical membrane pass occupies residues 214–234 (DYVWRIILMLGALPAILTYYW). The Cytoplasmic segment spans residues 235–297 (RMKMPETARY…ARFAKRHGAH (63 aa)). Residues 298–318 (LLGTAATWFLVDVAYYSQNLF) form a helical membrane-spanning segment. The Extracellular segment spans residues 319–349 (QKDIFTSIHWIPKARTMSELEEVFRISRAQT). Residues 350-370 (LIALCGTVPGYWFTVFLIDII) traverse the membrane as a helical segment. The Cytoplasmic portion of the chain corresponds to 371-374 (GRFK). The helical transmembrane segment at 375-395 (IQLLGFAGMTAFMLGLAIPYH) threads the bilayer. Residues 396-403 (HWTMPGNQ) lie on the Extracellular side of the membrane. Residues 404–424 (VIFVFLYGFTFFFANFGPNAT) form a helical membrane-spanning segment. At 425 to 443 (TFIVPAEIFPARLRSTCHG) the chain is on the cytoplasmic side. A helical membrane pass occupies residues 444–464 (ISAASGKAGAIIGAFGFLYAA). Topologically, residues 465–484 (QPQDKAHVDAGYKPGIGVRN) are extracellular. The helical transmembrane segment at 485–505 (ALFVLAGCNLVGFLMTWMLVP) threads the bilayer. Topologically, residues 506 to 541 (ESKGKSLEEMSGEADDEEASANGGATAVNSSGVEMV) are cytoplasmic. The tract at residues 512 to 541 (LEEMSGEADDEEASANGGATAVNSSGVEMV) is disordered. A compositionally biased stretch (acidic residues) spans 515–524 (MSGEADDEEA). Residues 532–541 (AVNSSGVEMV) show a composition bias toward polar residues.

This sequence belongs to the major facilitator superfamily. Phosphate:H(+) symporter (TC 2.A.1.9) family.

It is found in the membrane. Its function is as follows. High-affinity transporter for external inorganic phosphate. The chain is Probable inorganic phosphate transporter 1-12 (PHT1-12) from Oryza sativa subsp. japonica (Rice).